A 231-amino-acid chain; its full sequence is Protein usf (231 aa).

In Aquifex pyrophilus, this protein is Protein usf (usf).